Reading from the N-terminus, the 394-residue chain is MERAIKNFLSQESAGGILLMVAVALAMILANSPLAGVYQGFLATEVQLRVGDLDIDKPLLLWINDGLMALFFLLIGLEVKRELLEGALSSVAKASLPSIAAIGGMVFPALFYLAFNYATPETQVGWAIPAATDIAFALGIMALLGNRVPVALKVFLLALAIIDDLGVIVIIALFYSTDLSMTSLVIAAVSIVLMVALNKKGVSSILPYGLLGFILWVAVLKSGVHATLAGVIIAFCIPLRAKDGTSPSEHLEHKLHPWSTFMILPVFAFANAGLSLTNMTLDSFAEPITLGIIMGLLLGKPIGVLLFSYLAVKLKLAELPPGIGWRHIIPVAVMCGIGFTMSVFIASLAFEHSPAAYGDYARLGILTGSLLAALIGYFWLAKVLPETGEKHETH.

Helical transmembrane passes span 17-37, 59-79, 95-115, 124-144, 154-174, 177-197, 213-233, 261-281, 287-307, 328-348, and 363-383; these read ILLMVAVALAMILANSPLAGV, LLLWINDGLMALFFLLIGLEV, SLPSIAAIGGMVFPALFYLAF, VGWAIPAATDIAFALGIMALL, VFLLALAIIDDLGVIVIIALF, TDLSMTSLVIAAVSIVLMVAL, FILWVAVLKSGVHATLAGVII, FMILPVFAFANAGLSLTNMTL, PITLGIIMGLLLGKPIGVLLF, IIPVAVMCGIGFTMSVFIASL, and LGILTGSLLAALIGYFWLAKV.

Belongs to the NhaA Na(+)/H(+) (TC 2.A.33) antiporter family.

The protein resides in the cell inner membrane. The catalysed reaction is Na(+)(in) + 2 H(+)(out) = Na(+)(out) + 2 H(+)(in). In terms of biological role, na(+)/H(+) antiporter that extrudes sodium in exchange for external protons. This chain is Na(+)/H(+) antiporter NhaA, found in Shewanella frigidimarina (strain NCIMB 400).